We begin with the raw amino-acid sequence, 443 residues long: 3-phosphoshikimate 1-carboxyvinyltransferase (443 aa).

Residues 1–25 (MSHSAEPLPMTARRSGPLTGEAQVP) are disordered. The 3-phosphoshikimate site is built by Lys28, Ser29, and Arg33. Lys28 contributes to the phosphoenolpyruvate binding site. Phosphoenolpyruvate is bound by residues Gly101 and Arg129. Residues Ser174, Gln176, Asp326, and Lys353 each contribute to the 3-phosphoshikimate site. A phosphoenolpyruvate-binding site is contributed by Gln176. Asp326 acts as the Proton acceptor in catalysis. Phosphoenolpyruvate-binding residues include Arg357 and Arg400.

The protein belongs to the EPSP synthase family. Monomer.

It localises to the cytoplasm. The catalysed reaction is 3-phosphoshikimate + phosphoenolpyruvate = 5-O-(1-carboxyvinyl)-3-phosphoshikimate + phosphate. It participates in metabolic intermediate biosynthesis; chorismate biosynthesis; chorismate from D-erythrose 4-phosphate and phosphoenolpyruvate: step 6/7. In terms of biological role, catalyzes the transfer of the enolpyruvyl moiety of phosphoenolpyruvate (PEP) to the 5-hydroxyl of shikimate-3-phosphate (S3P) to produce enolpyruvyl shikimate-3-phosphate and inorganic phosphate. This chain is 3-phosphoshikimate 1-carboxyvinyltransferase, found in Paracoccus denitrificans (strain Pd 1222).